Reading from the N-terminus, the 310-residue chain is Olfactory receptor 10N1 (310 aa).

At Met-1 to Thr-23 the chain is on the extracellular side. N-linked (GlcNAc...) asparagine glycosylation is present at Asn-3. Residues Leu-24–Phe-44 traverse the membrane as a helical segment. The Cytoplasmic segment spans residues Thr-45–Thr-55. The chain crosses the membrane as a helical span at residues Pro-56–Cys-76. Topologically, residues Pro-77 to Cys-95 are extracellular. Cys-95 and Cys-187 form a disulfide bridge. The chain crosses the membrane as a helical span at residues Ala-96 to Met-116. The Cytoplasmic segment spans residues Ala-117–Pro-136. A helical transmembrane segment spans residues Gly-137–Leu-157. Topologically, residues Thr-158–Gly-202 are extracellular. The chain crosses the membrane as a helical span at residues Phe-203–Ile-223. Residues Leu-224–Ser-237 are Cytoplasmic-facing. The chain crosses the membrane as a helical span at residues Thr-238 to Leu-258. The Extracellular segment spans residues Gln-259 to Pro-264. A helical membrane pass occupies residues Leu-265 to Ile-285. Over Tyr-286–Lys-310 the chain is Cytoplasmic.

Belongs to the G-protein coupled receptor 1 family.

It localises to the cell membrane. Odorant receptor. This chain is Olfactory receptor 10N1, found in Mus musculus (Mouse).